The sequence spans 110 residues: Cytochrome subunit of sulfide dehydrogenase (110 aa).

An N-terminal signal peptide occupies residues 1–16; the sequence is MLAAAPLLLASGNGFA. Heme c is bound by residues C41, C44, H45, and M83.

Dimer of one cytochrome and one flavoprotein. In terms of processing, binds 1 heme c group covalently per subunit.

The protein localises to the periplasm. Its function is as follows. Monoheme cytochrome that function as the electron transport subunit of sulfide dehydrogenase. This is Cytochrome subunit of sulfide dehydrogenase (fccA) from Chlorobaculum tepidum (strain ATCC 49652 / DSM 12025 / NBRC 103806 / TLS) (Chlorobium tepidum).